The chain runs to 137 residues: Universal stress protein HP_0031 (137 aa).

Belongs to the universal stress protein A family.

The sequence is that of Universal stress protein HP_0031 from Helicobacter pylori (strain ATCC 700392 / 26695) (Campylobacter pylori).